A 319-amino-acid polypeptide reads, in one-letter code: Ribosomal RNA large subunit methyltransferase F (319 aa).

Belongs to the methyltransferase superfamily. METTL16/RlmF family.

It localises to the cytoplasm. The catalysed reaction is adenosine(1618) in 23S rRNA + S-adenosyl-L-methionine = N(6)-methyladenosine(1618) in 23S rRNA + S-adenosyl-L-homocysteine + H(+). In terms of biological role, specifically methylates the adenine in position 1618 of 23S rRNA. This chain is Ribosomal RNA large subunit methyltransferase F, found in Aliivibrio fischeri (strain ATCC 700601 / ES114) (Vibrio fischeri).